Reading from the N-terminus, the 230-residue chain is GTP cyclohydrolase III (230 aa).

Belongs to the archaeal-type GTP cyclohydrolase family.

The enzyme catalyses GTP + 3 H2O = 2-amino-5-formylamino-6-(5-phospho-D-ribosylamino)pyrimidin-4(3H)-one + 2 phosphate + 2 H(+). Its function is as follows. Catalyzes the formation of 2-amino-5-formylamino-6-ribofuranosylamino-4(3H)-pyrimidinone ribonucleotide monophosphate and inorganic phosphate from GTP. Also has an independent pyrophosphate phosphohydrolase activity. This chain is GTP cyclohydrolase III, found in Saccharolobus islandicus (strain M.14.25 / Kamchatka #1) (Sulfolobus islandicus).